Reading from the N-terminus, the 206-residue chain is Methyltransferase-like 26 (206 aa).

It belongs to the UPF0585 family.

This is Methyltransferase-like 26 from Danio rerio (Zebrafish).